The chain runs to 78 residues: UPF0270 protein ECA4061 (78 aa).

It belongs to the UPF0270 family.

The chain is UPF0270 protein ECA4061 from Pectobacterium atrosepticum (strain SCRI 1043 / ATCC BAA-672) (Erwinia carotovora subsp. atroseptica).